Consider the following 342-residue polypeptide: Glycerol-1-phosphate dehydrogenase [NAD(P)+] (342 aa).

Residues 84–88 (GRPID) and 106–109 (TAAS) contribute to the NAD(+) site. Residue D111 coordinates substrate. S115 provides a ligand contact to NAD(+). A substrate-binding site is contributed by D160. The Zn(2+) site is built by D160 and H241. Substrate is bound at residue H245. Residue H260 participates in Zn(2+) binding.

Belongs to the glycerol-1-phosphate dehydrogenase family. In terms of assembly, homodimer. Requires Zn(2+) as cofactor.

The protein resides in the cytoplasm. It carries out the reaction sn-glycerol 1-phosphate + NAD(+) = dihydroxyacetone phosphate + NADH + H(+). The catalysed reaction is sn-glycerol 1-phosphate + NADP(+) = dihydroxyacetone phosphate + NADPH + H(+). It participates in membrane lipid metabolism; glycerophospholipid metabolism. Catalyzes the NAD(P)H-dependent reduction of dihydroxyacetonephosphate (DHAP or glycerone phosphate) to glycerol 1-phosphate (G1P). The G1P thus generated is used as the glycerophosphate backbone of phospholipids in the cellular membranes of Archaea. This is Glycerol-1-phosphate dehydrogenase [NAD(P)+] from Pyrobaculum aerophilum (strain ATCC 51768 / DSM 7523 / JCM 9630 / CIP 104966 / NBRC 100827 / IM2).